The sequence spans 662 residues: Glycogen debranching enzyme (662 aa).

Catalysis depends on D338, which acts as the Nucleophile. Catalysis depends on E373, which acts as the Proton donor.

The protein belongs to the glycosyl hydrolase 13 family.

The catalysed reaction is Hydrolysis of (1-&gt;6)-alpha-D-glucosidic linkages to branches with degrees of polymerization of three or four glucose residues in limit dextrin.. Its pathway is glycan degradation; glycogen degradation. Removes maltotriose and maltotetraose chains that are attached by 1,6-alpha-linkage to the limit dextrin main chain, generating a debranched limit dextrin. In Yersinia pestis bv. Antiqua (strain Angola), this protein is Glycogen debranching enzyme.